The following is a 101-amino-acid chain: RNA-binding protein Hfq (101 aa).

One can recognise a Sm domain in the interval 9 to 68 (DPFLNALRRERVPVSIYLVNGIKLQGQVESFDQFVILLKNTVSQMVYKHAISTVVPSRPV). The interval 63–101 (VPSRPVSHHSNTPSGSTNNYHGSNPSAPQQPQQDSDDAE) is disordered. The segment covering 70–86 (HHSNTPSGSTNNYHGSN) has biased composition (polar residues).

This sequence belongs to the Hfq family. In terms of assembly, homohexamer.

Functionally, RNA chaperone that binds small regulatory RNA (sRNAs) and mRNAs to facilitate mRNA translational regulation in response to envelope stress, environmental stress and changes in metabolite concentrations. Also binds with high specificity to tRNAs. The protein is RNA-binding protein Hfq of Yersinia pseudotuberculosis serotype O:1b (strain IP 31758).